A 1227-amino-acid polypeptide reads, in one-letter code: ATP-dependent helicase/nuclease subunit A (1227 aa).

The UvrD-like helicase ATP-binding domain occupies Val3–Ser477. Ala24–Thr31 is a binding site for ATP. The UvrD-like helicase C-terminal domain maps to Gly505 to Gly788.

Belongs to the helicase family. AddA subfamily. As to quaternary structure, heterodimer of AddA and AddB/RexB. It depends on Mg(2+) as a cofactor.

The enzyme catalyses Couples ATP hydrolysis with the unwinding of duplex DNA by translocating in the 3'-5' direction.. It carries out the reaction ATP + H2O = ADP + phosphate + H(+). Functionally, the heterodimer acts as both an ATP-dependent DNA helicase and an ATP-dependent, dual-direction single-stranded exonuclease. Recognizes the chi site generating a DNA molecule suitable for the initiation of homologous recombination. The AddA nuclease domain is required for chi fragment generation; this subunit has the helicase and 3' -&gt; 5' nuclease activities. The polypeptide is ATP-dependent helicase/nuclease subunit A (Lactobacillus delbrueckii subsp. bulgaricus (strain ATCC 11842 / DSM 20081 / BCRC 10696 / JCM 1002 / NBRC 13953 / NCIMB 11778 / NCTC 12712 / WDCM 00102 / Lb 14)).